Here is a 111-residue protein sequence, read N- to C-terminus: Translation initiation factor 1A (111 aa).

The span at 1–13 (MKKSNNKNNHKNN) shows a compositional bias: basic residues. The segment at 1–30 (MKKSNNKNNHKNNHNNNQGGENIRVRSPRR) is disordered. Positions 23–96 (IRVRSPRRGE…EKADVIWRYT (74 aa)) constitute an S1-like domain.

Belongs to the eIF-1A family.

Its function is as follows. Seems to be required for maximal rate of protein biosynthesis. Enhances ribosome dissociation into subunits and stabilizes the binding of the initiator Met-tRNA(I) to 40 S ribosomal subunits. This Methanosphaera stadtmanae (strain ATCC 43021 / DSM 3091 / JCM 11832 / MCB-3) protein is Translation initiation factor 1A.